An 88-amino-acid polypeptide reads, in one-letter code: Arminin 1b (88 aa).

The N-terminal stretch at 1–18 is a signal peptide; that stretch reads MKTVLAFLFLTFIAFTHA. Residues 19 to 57 constitute a propeptide that is removed on maturation; that stretch reads ESYEDVKEEIKNEVEREIFEDLEEESDVLESNVRELNDA. V85 carries the post-translational modification Valine amide.

This sequence belongs to the arminin family. As to expression, expressed in entodermal epithelium along the body column.

Its subcellular location is the secreted. It localises to the target cell membrane. Antimicrobial peptide with a broad-spectrum antimicrobial activity. Keeps its antibacterial activity under a wide range of salt concentrations that mimic physiological conditions of human blood, which is surprising, since Hydra is an obligate freshwater animal with nearly no salt tolerance. Does not affect red blood cells. The chain is Arminin 1b from Hydra vulgaris (Hydra).